We begin with the raw amino-acid sequence, 449 residues long: Guanine nucleotide-binding protein alpha-2 subunit (449 aa).

The disordered stretch occupies residues 1 to 91 (MGLCASSEKN…TATANTSGSQ (91 aa)). G2 carries the N-myristoyl glycine lipid modification. Residue C4 is the site of S-palmitoyl cysteine attachment. Polar residues-rich tracts occupy residues 7-23 (SEKN…SAGS) and 38-48 (QKTVRTVNTAN). The segment covering 49–59 (QQEKQQQRQQQ) has biased composition (low complexity). The segment covering 72–91 (NGSINNAISPTATANTSGSQ) has biased composition (polar residues). In terms of domain architecture, G-alpha spans 122-448 (KELKVLLLGA…ENTLKDSGVL (327 aa)). A G1 motif region spans residues 125 to 138 (KVLLLGAGESGKST). Residues E133, S134, G135, K136, S137, T138, D245, L270, T276, G299, N365, K366, D368, and A420 each coordinate GTP. S137 contacts Mg(2+). A G2 motif region spans residues 268-276 (DILRSRQMT). Residue T276 participates in Mg(2+) binding. The G3 motif stretch occupies residues 292–301 (MHIYDVGGQR). The segment at 361–368 (VLFLNKID) is G4 motif. The interval 418–423 (TQATDT) is G5 motif.

This sequence belongs to the G-alpha family. G(q) subfamily. In terms of assembly, g proteins are composed of 3 units; alpha, beta and gamma. The alpha chain contains the guanine nucleotide binding site. GPA2 interacts with the kelch repeat beta-mimic proteins GPB1 and GPB2 and with the gamma subunit GPG1. Interacts with the G protein coupled receptor GPR1. Also interacts with regulators of G protein signaling (RGS) protein RGS2. Requires Mg(2+) as cofactor. Myristoylation at Gly-2 and palmitoylation at Cys-4 are required for membrane localization and function of the protein.

It localises to the cell membrane. With respect to regulation, alternates between an inactive form bound to GDP and an active form bound to GTP. Activated by the G protein coupled receptor (GPCR) GPR1, which serves as a guanine nucleotide-exchange factor (GEF), and inactivated by RGS2, acting as a GTPase-activating protein (GAP) for GPA2. Alpha subunit of the heterotrimeric guanine nucleotide-binding protein (G protein) involved in glucose-induced cAMP signaling. Binds to its cognate transmembrane receptor GPR1, which senses extracellular carbon sources, and activates cAMP-PKA signaling and governs diploid pseudohyphal differentiation and haploid invasive growth. The G protein beta-mimic proteins GPB1 and GPB2 inhibit GPA2-GPR1 coupling, probably to reduce signaling in the absence of glucose. The protein is Guanine nucleotide-binding protein alpha-2 subunit (GPA2) of Saccharomyces cerevisiae (strain ATCC 204508 / S288c) (Baker's yeast).